The primary structure comprises 449 residues: Hyaluronidase-1 (449 aa).

Positions 1 to 23 (MYHIWIKFLAAWIFLKRFNGVHV) are cleaved as a signal peptide. 2 cysteine pairs are disulfide-bonded: cysteine 47/cysteine 340 and cysteine 211/cysteine 227. Asparagine 67, asparagine 103, and asparagine 111 each carry an N-linked (GlcNAc...) asparagine glycan. The active-site Proton donor is glutamate 135. Asparagine 153 is a glycosylation site (N-linked (GlcNAc...) asparagine). Asparagine 357 is a glycosylation site (N-linked (GlcNAc...) asparagine). 3 disulfides stabilise this stretch: cysteine 365–cysteine 376, cysteine 370–cysteine 427, and cysteine 429–cysteine 438. An N-linked (GlcNAc...) asparagine glycan is attached at asparagine 401. In terms of domain architecture, EGF-like spans 427–438 (CQCYQGWKGLYC).

This sequence belongs to the glycosyl hydrolase 56 family. Monomer. Expressed by the venom gland.

The protein localises to the secreted. The catalysed reaction is Random hydrolysis of (1-&gt;4)-linkages between N-acetyl-beta-D-glucosamine and D-glucuronate residues in hyaluronate.. Functionally, snake venom endo-hyaluronidase that degrades hyaluronan to smaller oligosaccharide fragments. In venom, it is not toxic by itself, but increases the diffusion of other venom proteins by degrading the extracellular matrix. In addition, it displays antiedematogenic activity. This chain is Hyaluronidase-1, found in Cerastes cerastes (Horned desert viper).